The sequence spans 478 residues: ATP synthase subunit beta (478 aa).

164–171 (GGAGVGKT) is an ATP binding site.

Belongs to the ATPase alpha/beta chains family. In terms of assembly, F-type ATPases have 2 components, CF(1) - the catalytic core - and CF(0) - the membrane proton channel. CF(1) has five subunits: alpha(3), beta(3), gamma(1), delta(1), epsilon(1). CF(0) has three main subunits: a(1), b(2) and c(9-12). The alpha and beta chains form an alternating ring which encloses part of the gamma chain. CF(1) is attached to CF(0) by a central stalk formed by the gamma and epsilon chains, while a peripheral stalk is formed by the delta and b chains.

The protein localises to the cell membrane. It carries out the reaction ATP + H2O + 4 H(+)(in) = ADP + phosphate + 5 H(+)(out). Functionally, produces ATP from ADP in the presence of a proton gradient across the membrane. The catalytic sites are hosted primarily by the beta subunits. The polypeptide is ATP synthase subunit beta (Corynebacterium kroppenstedtii (strain DSM 44385 / JCM 11950 / CIP 105744 / CCUG 35717)).